Consider the following 379-residue polypeptide: Anomalous homeobox protein (379 aa).

A DNA-binding region (homeobox) is located at residues 135–196 (PEGLKSRNFP…NYRRRQRALP (62 aa)). The segment at 195 to 283 (LPQHMKPAQQ…SKPLDVSGHP (89 aa)) is disordered. The segment covering 237–246 (QWSEEREEKG) has biased composition (basic and acidic residues).

The protein resides in the nucleus. This chain is Anomalous homeobox protein (ANHX), found in Homo sapiens (Human).